We begin with the raw amino-acid sequence, 207 residues long: Alpha-1-acid glycoprotein 1 (207 aa).

An N-terminal signal peptide occupies residues 1–18; that stretch reads MALHTVLIILSLLPMLEA. At Gln-19 the chain carries Pyrrolidone carboxylic acid. Asn-25, Asn-34, Asn-76, Asn-94, and Asn-104 each carry an N-linked (GlcNAc...) asparagine glycan. Cys-91 and Cys-184 form a disulfide bridge.

Belongs to the calycin superfamily. Lipocalin family.

It is found in the secreted. Its function is as follows. Functions as a transport protein in the blood stream. Binds various ligands in the interior of its beta-barrel domain. Appears to function in modulating the activity of the immune system during the acute-phase reaction. In Mus musculus (Mouse), this protein is Alpha-1-acid glycoprotein 1 (Orm1).